The following is a 132-amino-acid chain: Large ribosomal subunit protein uL22c (132 aa).

The protein belongs to the universal ribosomal protein uL22 family. Part of the 50S ribosomal subunit.

It is found in the plastid. Its subcellular location is the chloroplast. In terms of biological role, this protein binds specifically to 23S rRNA. The globular domain of the protein is located near the polypeptide exit tunnel on the outside of the subunit, while an extended beta-hairpin is found that lines the wall of the exit tunnel in the center of the 70S ribosome. This chain is Large ribosomal subunit protein uL22c (rpl22), found in Populus alba (White poplar).